The sequence spans 156 residues: ATP synthase subunit b (156 aa).

Residues 11 to 31 traverse the membrane as a helical segment; the sequence is AIAFFIFVVFCMKYVWPPLMA.

Belongs to the ATPase B chain family. In terms of assembly, F-type ATPases have 2 components, F(1) - the catalytic core - and F(0) - the membrane proton channel. F(1) has five subunits: alpha(3), beta(3), gamma(1), delta(1), epsilon(1). F(0) has three main subunits: a(1), b(2) and c(10-14). The alpha and beta chains form an alternating ring which encloses part of the gamma chain. F(1) is attached to F(0) by a central stalk formed by the gamma and epsilon chains, while a peripheral stalk is formed by the delta and b chains.

The protein localises to the cell inner membrane. Its function is as follows. F(1)F(0) ATP synthase produces ATP from ADP in the presence of a proton or sodium gradient. F-type ATPases consist of two structural domains, F(1) containing the extramembraneous catalytic core and F(0) containing the membrane proton channel, linked together by a central stalk and a peripheral stalk. During catalysis, ATP synthesis in the catalytic domain of F(1) is coupled via a rotary mechanism of the central stalk subunits to proton translocation. Component of the F(0) channel, it forms part of the peripheral stalk, linking F(1) to F(0). The protein is ATP synthase subunit b of Aeromonas hydrophila subsp. hydrophila (strain ATCC 7966 / DSM 30187 / BCRC 13018 / CCUG 14551 / JCM 1027 / KCTC 2358 / NCIMB 9240 / NCTC 8049).